The chain runs to 540 residues: Signal peptide peptidase-like 3 (540 aa).

An N-terminal signal peptide occupies residues 1 to 28; that stretch reads MSSFDPPNHRYSALVLILLLLGFSVAAA. Topologically, residues 29-194 are lumenal; sequence DDVSWTEDSS…LYAPKRPAVD (166 aa). Positions 98–172 constitute a PA domain; sequence SHLSSRLDGH…ISKSSGDALN (75 aa). 2 N-linked (GlcNAc...) asparagine glycosylation sites follow: N155 and N172. Residues 195 to 215 form a helical membrane-spanning segment; the sequence is LTAGLLLLMAVGTVVVASLWS. Residues 216–250 are Cytoplasmic-facing; sequence ELTDPDQANESYSILAKDVSSAGTRKDDPEKEILD. The helical transmembrane segment at 251–273 threads the bilayer; the sequence is ISVTGAVFFIVTASIFLLLLFYF. Over 274–276 the chain is Lumenal; it reads MSS. Residues 277 to 299 form a helical membrane-spanning segment; that stretch reads WFVWVLTIFFCIGGMQGMHNIIM. Topologically, residues 300–321 are cytoplasmic; that stretch reads AVILRKCRHLARKSVKLPLLGT. Residues 322 to 342 traverse the membrane as a helical segment; sequence MSVLSLLVNIVCLAFAVFWFI. Residues 343-347 lie on the Lumenal side of the membrane; sequence KRHTS. The helical transmembrane segment at 348 to 368 threads the bilayer; that stretch reads YSWVGQDILGICLMITALQVV. The Cytoplasmic segment spans residues 369 to 377; sequence RLPNIKVAT. The chain crosses the membrane as a helical span at residues 378–398; it reads VLLCCAFVYDIFWVFISPLIF. Residue D387 is part of the active site. Residues 399–429 lie on the Lumenal side of the membrane; that stretch reads HESVMIVVAQGDSSTGESIPMLLRIPRFFDP. Residues 430–450 traverse the membrane as a helical segment; the sequence is WGGYDMIGFGDILFPGLLISF. Residue D440 is part of the active site. Residues 451–466 lie on the Cytoplasmic side of the membrane; the sequence is ASRYDKIKKRVISNGY. The chain crosses the membrane as a helical span at residues 467–487; it reads FLWLTIGYGIGLLLTYLGLYL. Over 488–492 the chain is Lumenal; it reads MDGHG. Residues 493–513 traverse the membrane as a helical segment; that stretch reads QPALLYIVPCTLGLAVILGLV. The short motif at 494–496 is the PAL element; the sequence is PAL. Residues 514 to 540 are Cytoplasmic-facing; sequence RGELKELWNYGIEESESHTPEDPMPVA.

The protein belongs to the peptidase A22B family. Glycosylated. In terms of tissue distribution, ubiquitous.

The protein localises to the endosome membrane. Intramembrane-cleaving aspartic protease (I-CLiP) that cleaves type II membrane signal peptides in the hydrophobic plane of the membrane. This Arabidopsis thaliana (Mouse-ear cress) protein is Signal peptide peptidase-like 3 (SPPL3).